The chain runs to 455 residues: Chromosomal replication initiator protein DnaA (455 aa).

A domain I, interacts with DnaA modulators region spans residues 1-70 (MTNETWVQVR…RMRLTEAGSP (70 aa)). The domain II stretch occupies residues 70–113 (PVERLEFAVSNTPRAPLKEVKAAAPAASPARARPAPPEEDLRGA). The interval 87–109 (KEVKAAAPAASPARARPAPPEED) is disordered. The segment covering 91-102 (AAAPAASPARAR) has biased composition (low complexity). A domain III, AAA+ region region spans residues 114–335 (PLDARFTFDS…GALTRLFAFA (222 aa)). ATP is bound by residues Gly158, Gly160, Lys161, and Thr162. Residues 336–455 (SLVGREITLD…LQLLRRLLQA (120 aa)) form a domain IV, binds dsDNA region.

Belongs to the DnaA family. Oligomerizes as a right-handed, spiral filament on DNA at oriC.

The protein resides in the cytoplasm. In terms of biological role, plays an essential role in the initiation and regulation of chromosomal replication. ATP-DnaA binds to the origin of replication (oriC) to initiate formation of the DNA replication initiation complex once per cell cycle. Binds the DnaA box (a 9 base pair repeat at the origin) and separates the double-stranded (ds)DNA. Forms a right-handed helical filament on oriC DNA; dsDNA binds to the exterior of the filament while single-stranded (ss)DNA is stabiized in the filament's interior. The ATP-DnaA-oriC complex binds and stabilizes one strand of the AT-rich DNA unwinding element (DUE), permitting loading of DNA polymerase. After initiation quickly degrades to an ADP-DnaA complex that is not apt for DNA replication. Binds acidic phospholipids. The protein is Chromosomal replication initiator protein DnaA of Cereibacter sphaeroides (strain ATCC 17029 / ATH 2.4.9) (Rhodobacter sphaeroides).